The sequence spans 277 residues: Radial spoke head protein 9 homolog (277 aa).

It belongs to the flagellar radial spoke RSP9 family. Component of axonemal radial spoke complexes.

Its subcellular location is the cytoplasm. The protein localises to the cytoskeleton. It is found in the cilium axoneme. The protein resides in the flagellum axoneme. It localises to the cell projection. Its subcellular location is the kinocilium. Functionally, functions as part of axonemal radial spoke complexes that play an important part in the motility of sperm and cilia. Essential for both the radial spoke head assembly and the central pair microtubule stability in ependymal motile cilia. Required for motility of olfactory and neural cilia and for the structural integrity of ciliary axonemes in both 9+0 and 9+2 motile cilia. The sequence is that of Radial spoke head protein 9 homolog (rsph9) from Xenopus tropicalis (Western clawed frog).